Reading from the N-terminus, the 361-residue chain is Histidine biosynthesis bifunctional protein HisB (361 aa).

The segment at 1 to 172 is histidinol-phosphatase; sequence MTQPTLFIDR…PKTTACKRPP (172 aa). Aspartate 9 serves as the catalytic Nucleophile. 2 residues coordinate Mg(2+): aspartate 9 and aspartate 11. Aspartate 11 serves as the catalytic Proton donor. The Zn(2+) site is built by cysteine 92, histidine 94, cysteine 100, and cysteine 102. Mg(2+) is bound at residue aspartate 129. Residues 173 to 361 are imidazoleglycerol-phosphate dehydratase; it reads RYAEVVRTTK…NELPSSKGVL (189 aa).

In the N-terminal section; belongs to the histidinol-phosphatase family. It in the C-terminal section; belongs to the imidazoleglycerol-phosphate dehydratase family. Requires Mg(2+) as cofactor. The cofactor is Zn(2+).

It is found in the cytoplasm. It catalyses the reaction D-erythro-1-(imidazol-4-yl)glycerol 3-phosphate = 3-(imidazol-4-yl)-2-oxopropyl phosphate + H2O. The catalysed reaction is L-histidinol phosphate + H2O = L-histidinol + phosphate. It functions in the pathway amino-acid biosynthesis; L-histidine biosynthesis; L-histidine from 5-phospho-alpha-D-ribose 1-diphosphate: step 6/9. It participates in amino-acid biosynthesis; L-histidine biosynthesis; L-histidine from 5-phospho-alpha-D-ribose 1-diphosphate: step 8/9. This chain is Histidine biosynthesis bifunctional protein HisB, found in Actinobacillus pleuropneumoniae serotype 3 (strain JL03).